Here is a 593-residue protein sequence, read N- to C-terminus: Numb-related protein 1 (593 aa).

Disordered stretches follow at residues 1–97 (MSAS…WQPD), 235–278 (TAQV…NSRS), 331–375 (LRQG…FGTQ), and 493–581 (MSMS…DPFD). Ser-17 carries the phosphoserine; by PKC modification. Residues 27–37 (QNSLVSEQQPS) show a composition bias toward polar residues. The segment covering 64–74 (RSLRLPKKRRD) has biased composition (basic residues). Position 65 is a phosphoserine; by PKC (Ser-65). The PID domain maps to 102 to 255 (RTGTCCFNVK…STSSTPPKDI (154 aa)). 3 stretches are compositionally biased toward polar residues: residues 236-251 (AQVNVQSAQESTSSTP), 261-278 (EDNTSEGTSTQNPSNSRS), and 354-364 (SLRTVSNNPTE). Over residues 493 to 511 (MSMSPTSPSSDPPSTSSYS) the composition is skewed to low complexity. Over residues 516 to 528 (SGPPPAHAPPPLP) the composition is skewed to pro residues. Polar residues predominate over residues 532-565 (AVSNGSPSIYQQQLQQANSTRNSPAGINWNSSPN).

As to quaternary structure, interacts with pkc-3. As to expression, expressed in cells comprising the intestine, pharyngeal cells, the anal sphincter and depressor muscles.

It is found in the cytoplasm. The protein localises to the cell cortex. The protein resides in the cytoskeleton. Its subcellular location is the membrane. In terms of biological role, involved in the tethering and targeting of pkc-3 to modulate the intracellular distribution of the kinase. The complex formed with pkc-3 complexes are likely to be involved in assembly, maintenance, and/or regulation of protein complexes that execute asymmetric and/or polarized cell functions. This is Numb-related protein 1 from Caenorhabditis elegans.